A 428-amino-acid chain; its full sequence is Glutamate-1-semialdehyde 2,1-aminomutase (428 aa).

An N6-(pyridoxal phosphate)lysine modification is found at lysine 267.

This sequence belongs to the class-III pyridoxal-phosphate-dependent aminotransferase family. HemL subfamily. As to quaternary structure, homodimer. Pyridoxal 5'-phosphate serves as cofactor.

It is found in the cytoplasm. The catalysed reaction is (S)-4-amino-5-oxopentanoate = 5-aminolevulinate. It functions in the pathway porphyrin-containing compound metabolism; protoporphyrin-IX biosynthesis; 5-aminolevulinate from L-glutamyl-tRNA(Glu): step 2/2. This chain is Glutamate-1-semialdehyde 2,1-aminomutase, found in Pelobacter propionicus (strain DSM 2379 / NBRC 103807 / OttBd1).